Consider the following 125-residue polypeptide: Putative glutaredoxin-C2 (125 aa).

Positions 2-103 (AERVARLSSQ…PLLREAGALW (102 aa)) constitute a Glutaredoxin domain. Cysteines 22 and 25 form a disulfide.

Belongs to the glutaredoxin family. CC-type subfamily.

It localises to the cytoplasm. In terms of biological role, has a glutathione-disulfide oxidoreductase activity in the presence of NADPH and glutathione reductase. Reduces low molecular weight disulfides and proteins. The protein is Putative glutaredoxin-C2 (GRXC2) of Oryza sativa subsp. japonica (Rice).